A 197-amino-acid polypeptide reads, in one-letter code: Dephospho-CoA kinase (197 aa).

Residues 2-197 (IIGLTGGIGS…HTKYMELLNE (196 aa)) form the DPCK domain. 10–15 (GSGKSA) contacts ATP.

It belongs to the CoaE family.

It localises to the cytoplasm. The enzyme catalyses 3'-dephospho-CoA + ATP = ADP + CoA + H(+). The protein operates within cofactor biosynthesis; coenzyme A biosynthesis; CoA from (R)-pantothenate: step 5/5. Functionally, catalyzes the phosphorylation of the 3'-hydroxyl group of dephosphocoenzyme A to form coenzyme A. The polypeptide is Dephospho-CoA kinase (Gamma-proteobacterium EBAC31A08).